We begin with the raw amino-acid sequence, 396 residues long: RNA binding protein fox-1 homolog 1 (396 aa).

The segment at 1–119 (MNCEREQLRG…ESKSQPKRLH (119 aa)) is disordered. Residues 67–86 (PPTQTHSEQSADTSAQTVSG) are compositionally biased toward polar residues. The segment covering 87–98 (TATQTDDAAPTD) has biased composition (low complexity). Polar residues predominate over residues 99–112 (GQPQTQPSENTESK). The RRM domain occupies 116–192 (KRLHVSNIPF…RKIEVNNATA (77 aa)). Arginine 316 and alanine 337 each carry asymmetric dimethylarginine. Omega-N-methylarginine is present on arginine 387.

Binds to the C-terminus of ATXN2. Detected in brain (at protein level). Detected in heart, brain, neurons, skeletal muscle and embryo.

It is found in the nucleus. Its subcellular location is the cytoplasm. Functionally, RNA-binding protein that regulates alternative splicing events by binding to 5'-UGCAUGU-3' elements. Prevents binding of U2AF2 to the 3'-splice site. Regulates alternative splicing of tissue-specific exons and of differentially spliced exons during erythropoiesis. The sequence is that of RNA binding protein fox-1 homolog 1 (Rbfox1) from Mus musculus (Mouse).